We begin with the raw amino-acid sequence, 240 residues long: Purine nucleoside phosphorylase DeoD-type (240 aa).

A purine D-ribonucleoside is bound at residue His5. Phosphate-binding positions include Gly21, Arg25, Arg44, and 88–91 (RVGS). Residues 181–183 (EME) and 205–206 (SD) each bind a purine D-ribonucleoside. Residue Asp206 is the Proton donor of the active site.

It belongs to the PNP/UDP phosphorylase family. As to quaternary structure, homohexamer; trimer of homodimers.

The catalysed reaction is a purine D-ribonucleoside + phosphate = a purine nucleobase + alpha-D-ribose 1-phosphate. It carries out the reaction a purine 2'-deoxy-D-ribonucleoside + phosphate = a purine nucleobase + 2-deoxy-alpha-D-ribose 1-phosphate. Its function is as follows. Catalyzes the reversible phosphorolytic breakdown of the N-glycosidic bond in the beta-(deoxy)ribonucleoside molecules, with the formation of the corresponding free purine bases and pentose-1-phosphate. This is Purine nucleoside phosphorylase DeoD-type from Enterobacter sp. (strain 638).